The chain runs to 153 residues: Pheromone-binding protein Gp-9 (153 aa).

An N-terminal signal peptide occupies residues 1–19 (MKTFVLHIFIFALVAFASA). 3 cysteine pairs are disulfide-bonded: cysteine 37–cysteine 77, cysteine 73–cysteine 129, and cysteine 118–cysteine 138.

The protein belongs to the PBP/GOBP family. As to quaternary structure, homodimer.

It is found in the secreted. Functionally, colony queen number, a major feature of social organization, is associated with worker genotype for Gp-9. Colonies are headed by either a single reproductive queen (monogyne form) or multiple queens (polygyne form). Differences in worker Gp-9 genotypes between social forms may cause differences in workers' abilities to recognize queens and regulate their numbers. The chain is Pheromone-binding protein Gp-9 from Solenopsis n. sp. (strain JP-2002) (Fire ant).